A 445-amino-acid chain; its full sequence is GTPase Der (445 aa).

EngA-type G domains lie at Pro-3–Asp-167 and Ile-180–Asn-353. GTP is bound by residues Gly-9–Ser-16, Asp-56–Phe-60, Asn-119–Glu-122, Gly-186–Ser-193, Asp-233–Leu-237, and Asn-298–Asp-301. The region spanning Arg-354–Val-438 is the KH-like domain.

It belongs to the TRAFAC class TrmE-Era-EngA-EngB-Septin-like GTPase superfamily. EngA (Der) GTPase family. As to quaternary structure, associates with the 50S ribosomal subunit.

In terms of biological role, GTPase that plays an essential role in the late steps of ribosome biogenesis. The protein is GTPase Der of Polaromonas naphthalenivorans (strain CJ2).